A 158-amino-acid polypeptide reads, in one-letter code: S-ribosylhomocysteine lyase (158 aa).

3 residues coordinate Fe cation: H54, H58, and C124.

This sequence belongs to the LuxS family. Homodimer. It depends on Fe cation as a cofactor.

It carries out the reaction S-(5-deoxy-D-ribos-5-yl)-L-homocysteine = (S)-4,5-dihydroxypentane-2,3-dione + L-homocysteine. Involved in the synthesis of autoinducer 2 (AI-2) which is secreted by bacteria and is used to communicate both the cell density and the metabolic potential of the environment. The regulation of gene expression in response to changes in cell density is called quorum sensing. Catalyzes the transformation of S-ribosylhomocysteine (RHC) to homocysteine (HC) and 4,5-dihydroxy-2,3-pentadione (DPD). This chain is S-ribosylhomocysteine lyase, found in Limosilactobacillus reuteri (Lactobacillus reuteri).